Reading from the N-terminus, the 336-residue chain is Holliday junction branch migration complex subunit RuvB (336 aa).

Residues 1–182 (MKERIVNLET…FGMSFRMQFY (182 aa)) are large ATPase domain (RuvB-L). Residues Leu21, Arg22, Gly63, Lys66, Thr67, Ser68, 129–131 (EDF), Arg172, Tyr182, and Arg219 contribute to the ATP site. Thr67 contributes to the Mg(2+) binding site. Residues 183 to 253 (SPSELALIIK…ITLHALNELG (71 aa)) are small ATPAse domain (RuvB-S). The interval 256 to 336 (ELGFDEADLA…IPTLKSQSLF (81 aa)) is head domain (RuvB-H). The DNA site is built by Arg310 and Arg315.

It belongs to the RuvB family. In terms of assembly, homohexamer. Forms an RuvA(8)-RuvB(12)-Holliday junction (HJ) complex. HJ DNA is sandwiched between 2 RuvA tetramers; dsDNA enters through RuvA and exits via RuvB. An RuvB hexamer assembles on each DNA strand where it exits the tetramer. Each RuvB hexamer is contacted by two RuvA subunits (via domain III) on 2 adjacent RuvB subunits; this complex drives branch migration. In the full resolvosome a probable DNA-RuvA(4)-RuvB(12)-RuvC(2) complex forms which resolves the HJ.

The protein localises to the cytoplasm. The enzyme catalyses ATP + H2O = ADP + phosphate + H(+). Functionally, the RuvA-RuvB-RuvC complex processes Holliday junction (HJ) DNA during genetic recombination and DNA repair, while the RuvA-RuvB complex plays an important role in the rescue of blocked DNA replication forks via replication fork reversal (RFR). RuvA specifically binds to HJ cruciform DNA, conferring on it an open structure. The RuvB hexamer acts as an ATP-dependent pump, pulling dsDNA into and through the RuvAB complex. RuvB forms 2 homohexamers on either side of HJ DNA bound by 1 or 2 RuvA tetramers; 4 subunits per hexamer contact DNA at a time. Coordinated motions by a converter formed by DNA-disengaged RuvB subunits stimulates ATP hydrolysis and nucleotide exchange. Immobilization of the converter enables RuvB to convert the ATP-contained energy into a lever motion, pulling 2 nucleotides of DNA out of the RuvA tetramer per ATP hydrolyzed, thus driving DNA branch migration. The RuvB motors rotate together with the DNA substrate, which together with the progressing nucleotide cycle form the mechanistic basis for DNA recombination by continuous HJ branch migration. Branch migration allows RuvC to scan DNA until it finds its consensus sequence, where it cleaves and resolves cruciform DNA. This chain is Holliday junction branch migration complex subunit RuvB, found in Helicobacter acinonychis (strain Sheeba).